A 311-amino-acid polypeptide reads, in one-letter code: Lipoyl synthase (311 aa).

[4Fe-4S] cluster contacts are provided by Cys47, Cys52, Cys58, Cys73, Cys77, Cys80, and Ser287. The Radical SAM core domain occupies 59-276 (WTKKHATVMI…AQIARAKGFL (218 aa)).

This sequence belongs to the radical SAM superfamily. Lipoyl synthase family. Requires [4Fe-4S] cluster as cofactor.

It localises to the cytoplasm. The catalysed reaction is [[Fe-S] cluster scaffold protein carrying a second [4Fe-4S](2+) cluster] + N(6)-octanoyl-L-lysyl-[protein] + 2 oxidized [2Fe-2S]-[ferredoxin] + 2 S-adenosyl-L-methionine + 4 H(+) = [[Fe-S] cluster scaffold protein] + N(6)-[(R)-dihydrolipoyl]-L-lysyl-[protein] + 4 Fe(3+) + 2 hydrogen sulfide + 2 5'-deoxyadenosine + 2 L-methionine + 2 reduced [2Fe-2S]-[ferredoxin]. It functions in the pathway protein modification; protein lipoylation via endogenous pathway; protein N(6)-(lipoyl)lysine from octanoyl-[acyl-carrier-protein]: step 2/2. Functionally, catalyzes the radical-mediated insertion of two sulfur atoms into the C-6 and C-8 positions of the octanoyl moiety bound to the lipoyl domains of lipoate-dependent enzymes, thereby converting the octanoylated domains into lipoylated derivatives. The sequence is that of Lipoyl synthase from Sphingopyxis alaskensis (strain DSM 13593 / LMG 18877 / RB2256) (Sphingomonas alaskensis).